Reading from the N-terminus, the 572-residue chain is MSKLIKGIAASDGVAIAKAYLIVEPDLSYDSNEKVTDIESEVEKFNDAIEASKIELTKIRNNAEAQLGADKAAIFDAHLLVLDDPELIQPIQDKIRNDKVNAATGLDEVTTQFISIFESMDNEYMKERAADIRDVSKRVLAHILGVDLPNPSLINESAVIVGNDLTPSDTAQLNKEFVQGFVTNIGGRTSHSAIMSRSLEIAAVVGTKSITEEVKQGDMIIVDGMSGDVIIDPTEDELIAYQNKRERFFEDKKELQKLRDADTVTVDGVHAELAANIGTPDDLSGVIDNGAQGIGLYRTEFLYMGRDQMPTEEEQFEAYKKVLETMDGKRVVVRTLDIGGDKELPYLDLPKEMNPFLGYRAIRLCLAQPEIFRPQLRALLRASVYGKLNIMFPMVATIKEFRDAKSMLLEEKENLLREGYEVSDDIELGIMVEIPATAALADVFAKEVDFFSIGTNDLIQYTLAADRMSERVSYLYQPYNPSILRLVKQVIEASHKEGKWTGMCGEMAGDQTAVPLLLGLGLDEFSMSATSILKARRQINGLSKNEMAELANRAVECSTQEEVVDLVNQLAK.

The active-site Tele-phosphohistidine intermediate is the His191. Residues Arg298 and Arg334 each coordinate phosphoenolpyruvate. Mg(2+) contacts are provided by Glu433 and Asp457. Residues 456 to 457 (ND) and Arg467 each bind phosphoenolpyruvate. The active-site Proton donor is the Cys504.

Belongs to the PEP-utilizing enzyme family. Homodimer. Mg(2+) serves as cofactor.

It localises to the cytoplasm. It carries out the reaction L-histidyl-[protein] + phosphoenolpyruvate = N(pros)-phospho-L-histidyl-[protein] + pyruvate. In terms of biological role, general (non sugar-specific) component of the phosphoenolpyruvate-dependent sugar phosphotransferase system (sugar PTS). This major carbohydrate active-transport system catalyzes the phosphorylation of incoming sugar substrates concomitantly with their translocation across the cell membrane. Enzyme I transfers the phosphoryl group from phosphoenolpyruvate (PEP) to the phosphoryl carrier protein (HPr). This Staphylococcus epidermidis (strain ATCC 35984 / DSM 28319 / BCRC 17069 / CCUG 31568 / BM 3577 / RP62A) protein is Phosphoenolpyruvate-protein phosphotransferase (ptsI).